We begin with the raw amino-acid sequence, 369 residues long: Translocating chain-associated membrane protein 1-like 1 (369 aa).

Over 1–29 (MGLRKKSTKNPPVLSQEFILQNHADIVSC) the chain is Cytoplasmic. The helical transmembrane segment at 30 to 50 (VGMFFLLGLVFEGTAEASIVF) threads the bilayer. Topologically, residues 51-81 (LTLQHSVAVPAAEEQATGSKSLYYYGVKDLA) are lumenal. The chain crosses the membrane as a helical span at residues 82 to 102 (TVFFYMLVAIIIHATIQEYVL). Residues 103–121 (DKINKRMQFTKAKQNKFNE) lie on the Cytoplasmic side of the membrane. Residues 117 to 326 (NKFNESGQFS…TLWLQRWVED (210 aa)) form the TLC domain. A helical transmembrane segment spans residues 122–142 (SGQFSVFYFFSCIWGTFILIS). Topologically, residues 143–164 (ENCLSDPTLIWKARPHSMMTFQ) are lumenal. The chain crosses the membrane as a helical span at residues 165-185 (MKFFYISQLAYWFHAFPELYF). The Cytoplasmic segment spans residues 186–196 (QKTKKQDIPRQ). The helical transmembrane segment at 197–215 (LVYIGLHLFHITGAYLLYL) threads the bilayer. Residues 216–219 (NHLG) are Lumenal-facing. A helical membrane pass occupies residues 220-242 (LLLLVLHYFVELLSHMCGLFYFS). The Cytoplasmic portion of the chain corresponds to 243 to 249 (DEKYQKG). A helical transmembrane segment spans residues 250-270 (ISLWAIVFILGRLVTLIVSVL). The Lumenal portion of the chain corresponds to 271 to 297 (TVGFHLAGSQNRNPDALTGNVNVLAAK). The helical transmembrane segment at 298 to 318 (IAVLSSSCTIQAYVTWNLITL) threads the bilayer. Topologically, residues 319-369 (WLQRWVEDSNIQASCMKKKRSRSSKKRTENGVGVETSNRVDCPPKRKEKSS) are cytoplasmic. Residues 335–369 (KKKRSRSSKKRTENGVGVETSNRVDCPPKRKEKSS) form a disordered region. The span at 360–369 (CPPKRKEKSS) shows a compositional bias: basic and acidic residues.

The protein belongs to the TRAM family.

Its subcellular location is the endoplasmic reticulum membrane. Functionally, stimulatory or required for the translocation of secretory proteins across the ER membrane. In Homo sapiens (Human), this protein is Translocating chain-associated membrane protein 1-like 1 (TRAM1L1).